The chain runs to 1059 residues: Dihydropyrimidine dehydrogenase [NADP(+)] (1059 aa).

Residues 84 to 118 (ERGALKEAMRCLKCADAPCQKSCPTQLDVKSFITS) enclose the 4Fe-4S ferredoxin-type 1 domain. Positions 94, 97, 102, 106, 145, 151, 155, and 171 each coordinate [4Fe-4S] cluster. FAD-binding positions include 207–211 (GCGPA), 231–239 (EKRAYIGGL), Arg-248, and Leu-274. Residues 354–357 (AGDT), 378–379 (RK), Arg-385, 451–453 (AFG), and 495–501 (DVAGVAE) each bind NADP(+). 494 to 503 (GDVAGVAETT) is an FAD binding site. FMN-binding positions include Ser-564 and 588 to 589 (KT). Substrate-binding positions include Asn-623 and 682–684 (NLS). Cys-685 functions as the Proton acceptor in the catalytic mechanism. Lys-723 provides a ligand contact to FMN. Position 750 to 751 (750 to 751 (NT)) interacts with substrate. Residues Gly-781, 807 to 809 (TGG), and 830 to 831 (CS) contribute to the FMN site. 4Fe-4S ferredoxin-type domains follow at residues 955 to 987 (KVAIIDDDMCINCGKCYMTCNDSGYQAITFDPV) and 989 to 1019 (HQPHVTEDDCTGCTLCYSVCPIPECIEMVPR). Positions 964, 967, 970, 974, 998, 1001, 1004, and 1008 each coordinate [4Fe-4S] cluster.

This sequence belongs to the dihydropyrimidine dehydrogenase family. The cofactor is [4Fe-4S] cluster. Requires FAD as cofactor. FMN is required as a cofactor.

It carries out the reaction 5,6-dihydrouracil + NADP(+) = uracil + NADPH + H(+). Its pathway is amino-acid biosynthesis; beta-alanine biosynthesis. Its function is as follows. Involved in pyrimidine base degradation. Catalyzes the reduction of uracil and thymine. Involved in the degradation of the chemotherapeutic drug 5-fluorouracil. The polypeptide is Dihydropyrimidine dehydrogenase [NADP(+)] (dpyd-1) (Caenorhabditis elegans).